Reading from the N-terminus, the 125-residue chain is MWQKLAWIALAGAGGTLSRYALSGLVQNLCGASFPWGTWVVNGLGCFLFGMIWALAEERLLITGEIRFIVLTGFMGAFTTFSTFAFEASQFLRDSEWLLAAIHLIGQNSLGLVCVFLGFTISQII.

Helical transmembrane passes span 6–26 (AWIA…SGLV), 36–56 (WGTW…WALA), 68–88 (FIVL…AFEA), and 97–117 (WLLA…CVFL). 2 residues coordinate Na(+): G76 and T79.

It belongs to the fluoride channel Fluc/FEX (TC 1.A.43) family.

Its subcellular location is the cell inner membrane. The catalysed reaction is fluoride(in) = fluoride(out). Na(+) is not transported, but it plays an essential structural role and its presence is essential for fluoride channel function. Fluoride-specific ion channel. Important for reducing fluoride concentration in the cell, thus reducing its toxicity. The chain is Fluoride-specific ion channel FluC from Nitrosococcus oceani (strain ATCC 19707 / BCRC 17464 / JCM 30415 / NCIMB 11848 / C-107).